A 213-amino-acid chain; its full sequence is Na(+)-translocating NADH-quinone reductase subunit E (213 aa).

6 helical membrane-spanning segments follow: residues 12–32 (AVFV…FLAV), 40–60 (IGLG…NQLI), 92–112 (FLGF…LEMF), 124–144 (LGIF…SLFM), 155–175 (VVFG…LAGI), and 191–211 (LGIT…FSGI).

The protein belongs to the NqrDE/RnfAE family. Composed of six subunits; NqrA, NqrB, NqrC, NqrD, NqrE and NqrF.

Its subcellular location is the cell inner membrane. It catalyses the reaction a ubiquinone + n Na(+)(in) + NADH + H(+) = a ubiquinol + n Na(+)(out) + NAD(+). NQR complex catalyzes the reduction of ubiquinone-1 to ubiquinol by two successive reactions, coupled with the transport of Na(+) ions from the cytoplasm to the periplasm. NqrA to NqrE are probably involved in the second step, the conversion of ubisemiquinone to ubiquinol. The polypeptide is Na(+)-translocating NADH-quinone reductase subunit E (Rhodopirellula baltica (strain DSM 10527 / NCIMB 13988 / SH1)).